A 338-amino-acid polypeptide reads, in one-letter code: MSSLRLLISDSYDPWFNLAVEECIFRQMSPNQRVLFLWRNADTVVIGRAQNPWKECNTRRMEQDGVKLARRSSGGGAVFHDLGNTCFTFMAGKPGYDKTISTQIILNALASLGIQATASGRNDLVVINGEDERKVSGSAYKETKDRGFHHGTLLLNADLSRLADYLNPDPKKLQAKGITSVRSRVTNLVELLPGIDHGKIRTAIEQAFFAYYDEQVSAEVISPQSLPNLPGFTEQFAKQSSWEWNFGQAPAFSHVVDTRFIWGGIELHFDVLHGAIDRCQIFTDSLNPTPLEALAQRLQGAAYRPDAIDKICQHWIDDFPELQTELQQACHWLVEVLR.

One can recognise a BPL/LPL catalytic domain in the interval 29 to 216 (SPNQRVLFLW…AFFAYYDEQV (188 aa)). ATP contacts are provided by residues R71, 76 to 79 (GAVF), and K134. K134 lines the (R)-lipoate pocket.

The protein belongs to the LplA family. In terms of assembly, monomer.

Its subcellular location is the cytoplasm. It catalyses the reaction L-lysyl-[lipoyl-carrier protein] + (R)-lipoate + ATP = N(6)-[(R)-lipoyl]-L-lysyl-[lipoyl-carrier protein] + AMP + diphosphate + H(+). It functions in the pathway protein modification; protein lipoylation via exogenous pathway; protein N(6)-(lipoyl)lysine from lipoate: step 1/2. The protein operates within protein modification; protein lipoylation via exogenous pathway; protein N(6)-(lipoyl)lysine from lipoate: step 2/2. Functionally, catalyzes both the ATP-dependent activation of exogenously supplied lipoate to lipoyl-AMP and the transfer of the activated lipoyl onto the lipoyl domains of lipoate-dependent enzymes. The protein is Lipoate-protein ligase A of Yersinia pseudotuberculosis serotype O:1b (strain IP 31758).